The following is a 240-amino-acid chain: Inhibitor of growth protein 5 (240 aa).

Residue Lys114 is modified to N6-acetyllysine. Positions 116–165 are disordered; sequence EGSDFESSGGRGLKKGRGQKEKRGSRGRGRRTSEEDTPKKKKHKGGSEFT. The residue at position 118 (Ser118) is a Phosphoserine. Arg126 is modified (omega-N-methylarginine). The PHD-type zinc finger occupies 186–235; it reads PTYCLCHQVSYGEMIGCDNPDCPIEWFHFACVDLTTKPKGKWFCPRCVQE. Residues Cys189, Cys191, Cys202, Cys207, His213, Cys216, Cys229, and Cys232 each coordinate Zn(2+).

This sequence belongs to the ING family. As to quaternary structure, component of the HBO1 complex composed of KAT7/HBO1, MEAF6, ING5, and one scaffold subunit: complexes containing BRPF scaffold (BRPF1, BRD1/BRPF2 or BRPF3) direct KAT7/HBO1 specificity towards H3K14ac, while complexes containing JADE scaffold (JADE1, JADE2 and JADE3) mediate acetylation of histone H4. Component of the MOZ/MORF complex composed at least of ING5, KAT6A, KAT6B, MEAF6 and one of BRPF1, BRD1/BRPF2 and BRPF3. Interacts with H3K4me3 and to a lesser extent with H3K4me2. Interacts with EP300 and p53/TP53. Interacts with INCA1. As to expression, down-regulated in bone marrow cells in acute myeloid leukemia patients as compared with normal bone marrow cells.

It is found in the nucleus. The protein localises to the chromosome. In terms of biological role, component of the HBO1 complex, which specifically mediates acetylation of histone H3 at 'Lys-14' (H3K14ac) and, to a lower extent, acetylation of histone H4. Component of the MOZ/MORF complex which has a histone H3 acetyltransferase activity. Through chromatin acetylation it may regulate DNA replication and may function as a transcriptional coactivator. Inhibits cell growth, induces a delay in S-phase progression and enhances Fas-induced apoptosis in an INCA1-dependent manner. This Homo sapiens (Human) protein is Inhibitor of growth protein 5 (ING5).